The primary structure comprises 109 residues: Class I hydrophobin 7 (109 aa).

The first 17 residues, 1–17 (MFAQSFIITALAALAVA), serve as a signal peptide directing secretion. 4 disulfides stabilise this stretch: cysteine 28/cysteine 88, cysteine 35/cysteine 82, cysteine 36/cysteine 69, and cysteine 89/cysteine 102.

It belongs to the fungal hydrophobin family. In terms of assembly, self-assembles to form functional amyloid fibrils called rodlets. Self-assembly into fibrillar rodlets occurs spontaneously at hydrophobic:hydrophilic interfaces and the rodlets further associate laterally to form amphipathic monolayers.

The protein localises to the secreted. The protein resides in the cell wall. Functionally, aerial growth, conidiation, and dispersal of filamentous fungi in the environment rely upon a capability of their secreting small amphipathic proteins called hydrophobins (HPBs) with low sequence identity. Class I can self-assemble into an outermost layer of rodlet bundles on aerial cell surfaces, conferring cellular hydrophobicity that supports fungal growth, development and dispersal; whereas Class II form highly ordered films at water-air interfaces through intermolecular interactions but contribute nothing to the rodlet structure. Hydph7 is a class I hydrophobin involved in fruiting body development. The protein is Class I hydrophobin 7 of Pleurotus ostreatus (strain PC15) (Oyster mushroom).